Consider the following 998-residue polypeptide: 2-imino-3-(indol-3-yl)propanoate dimerase (998 aa).

The catalysed reaction is 2 H2O2 = O2 + 2 H2O. It catalyses the reaction 2 2-iminio-3-(indol-3-yl)propanoate + H2O2 = indole-3-pyruvate imine dimer + 2 H2O. Its pathway is pigment biosynthesis; violacein biosynthesis. Its function is as follows. Catalyzes the hydrogen peroxide-dependent dimerization of two L-tryptophan-derived molecules (imine form of indole 3-pyruvate (IPA)), to form an uncharacterized product suggested to be indole-3-pyruvate imine dimer that can spontaneously convert into dichlorochromopyrrolate (CPA). The uncharacterized product is the substrate of VioE. The sequence is that of 2-imino-3-(indol-3-yl)propanoate dimerase (vioB) from Chromobacterium violaceum (strain ATCC 12472 / DSM 30191 / JCM 1249 / CCUG 213 / NBRC 12614 / NCIMB 9131 / NCTC 9757 / MK).